A 329-amino-acid polypeptide reads, in one-letter code: Tryptophan--tRNA ligase (329 aa).

Residues 9–11 and 17–18 each bind ATP; these read QPS and GN. Residues 10-18 carry the 'HIGH' region motif; that stretch reads PSGTITLGN. Aspartate 132 is an L-tryptophan binding site. Residues 144–146, valine 183, and 192–196 contribute to the ATP site; these read GDD and KMSKS. A 'KMSKS' region motif is present at residues 192–196; that stretch reads KMSKS.

Belongs to the class-I aminoacyl-tRNA synthetase family. In terms of assembly, homodimer.

The protein resides in the cytoplasm. The catalysed reaction is tRNA(Trp) + L-tryptophan + ATP = L-tryptophyl-tRNA(Trp) + AMP + diphosphate + H(+). Catalyzes the attachment of tryptophan to tRNA(Trp). This is Tryptophan--tRNA ligase from Bacillus anthracis.